Here is a 543-residue protein sequence, read N- to C-terminus: EH domain-containing protein 2 (543 aa).

Ser-3 and Ser-44 each carry phosphoserine. The Dynamin-type G domain maps to 55-286 (FDGKPMVLVA…DLFRDIQGLP (232 aa)). The segment at 65 to 72 (GQYSTGKT) is G1 motif. 65–72 (GQYSTGKT) contributes to the ATP binding site. The G2 motif stretch occupies residues 91–92 (EP). Positions 153–156 (DTPG) are G3 motif. A G4 motif region spans residues 219-222 (NKAD). Lys-220 is a binding site for ATP. A region of interest (G5 motif) is located at residue Val-243. ATP is bound at residue Trp-258. Positions 320–340 (TVFGKENKKKQLILKLPVIFA) are mediates membrane-binding. Phosphoserine occurs at positions 438, 468, 470, 484, and 493. In terms of domain architecture, EH spans 449–537 (DKSKYDEIFY…RRLVPPSKRR (89 aa)). Residues 481–516 (LPNSVLGRIWKLSDVDRDGMLDDEEFALASHLIEAK) form the EF-hand domain. Ca(2+) contacts are provided by Asp-494, Asp-496, Asp-498, Met-500, and Glu-505. The disordered stretch occupies residues 521 to 543 (GLPTNLPRRLVPPSKRRQKGSAE). Over residues 534 to 543 (SKRRQKGSAE) the composition is skewed to basic residues.

It belongs to the TRAFAC class dynamin-like GTPase superfamily. Dynamin/Fzo/YdjA family. EHD subfamily. In terms of assembly, homodimer and homooligomer. Interacts with EHD1. May also interact with EHD3 and EHD4. Interacts with MYOF. Interacts with EHBP1. Interacts with FER1L5 (via second C2 domain). Interacts with CAV1 in a cholesterol-dependent manner. Interacts (via EH domain) with PACSIN2 (via NPF motifs); this interaction probably stabilizes the caveolae. In terms of tissue distribution, detected in lung and adipocytes. Detected at lower levels in heart and skeletal muscle.

It localises to the cell membrane. It is found in the membrane. The protein localises to the caveola. The protein resides in the endosome membrane. Its subcellular location is the cytoplasm. It localises to the cytosol. With respect to regulation, the very low intrinsic ATPase activity is increased upon interaction with liposomes. Its function is as follows. ATP- and membrane-binding protein that controls membrane reorganization/tubulation upon ATP hydrolysis. Plays a role in membrane trafficking between the plasma membrane and endosomes. Important for the internalization of GLUT4. Required for fusion of myoblasts to skeletal muscle myotubes. Required for normal translocation of FER1L5 to the plasma membrane. Regulates the equilibrium between cell surface-associated and cell surface-dissociated caveolae by constraining caveolae at the cell membrane. The sequence is that of EH domain-containing protein 2 from Mus musculus (Mouse).